The primary structure comprises 253 residues: Tryptophan synthase alpha chain (253 aa).

Residues glutamate 46 and aspartate 57 each act as proton acceptor in the active site.

This sequence belongs to the TrpA family. Tetramer of two alpha and two beta chains.

It catalyses the reaction (1S,2R)-1-C-(indol-3-yl)glycerol 3-phosphate + L-serine = D-glyceraldehyde 3-phosphate + L-tryptophan + H2O. It participates in amino-acid biosynthesis; L-tryptophan biosynthesis; L-tryptophan from chorismate: step 5/5. In terms of biological role, the alpha subunit is responsible for the aldol cleavage of indoleglycerol phosphate to indole and glyceraldehyde 3-phosphate. This Dictyoglomus thermophilum (strain ATCC 35947 / DSM 3960 / H-6-12) protein is Tryptophan synthase alpha chain.